Here is a 124-residue protein sequence, read N- to C-terminus: Small ribosomal subunit protein bS6 (124 aa).

Belongs to the bacterial ribosomal protein bS6 family.

Binds together with bS18 to 16S ribosomal RNA. This is Small ribosomal subunit protein bS6 from Actinobacillus pleuropneumoniae serotype 5b (strain L20).